Consider the following 853-residue polypeptide: DNA mismatch repair protein MutS (853 aa).

613–620 lines the ATP pocket; the sequence is GPNMGGKS.

It belongs to the DNA mismatch repair MutS family.

This protein is involved in the repair of mismatches in DNA. It is possible that it carries out the mismatch recognition step. This protein has a weak ATPase activity. The chain is DNA mismatch repair protein MutS from Vibrio vulnificus (strain YJ016).